Consider the following 193-residue polypeptide: Ion-translocating oxidoreductase complex subunit A (193 aa).

6 helical membrane-spanning segments follow: residues 5 to 25 (ILFF…FLGL), 47 to 67 (FVIL…LLPL), 72 to 92 (LRII…EIVL), 102 to 122 (LLGI…IPLF), 134 to 154 (IFYG…FSCI), and 167 to 187 (FQGA…FMGF).

This sequence belongs to the NqrDE/RnfAE family. As to quaternary structure, the complex is composed of six subunits: RnfA, RnfB, RnfC, RnfD, RnfE and RnfG.

It is found in the cell inner membrane. Part of a membrane-bound complex that couples electron transfer with translocation of ions across the membrane. This is Ion-translocating oxidoreductase complex subunit A from Buchnera aphidicola subsp. Acyrthosiphon pisum (strain APS) (Acyrthosiphon pisum symbiotic bacterium).